We begin with the raw amino-acid sequence, 226 residues long: MADPGPDPESESESVFPREVGLFADSYSEKSQFCFCGHVLTITQNFGSRLGVAARVWDAALSLCNYFESQNVDFRGKKVIELGAGTGIVGILAALQGGDVTITDLPLALEQIQGNVQANVPAGGQAQVRALSWGIDHHVFPANYDLVLGADIVYLEPTFPLLLGTLQHLCRPHGTIYLASKMRKEHGTESFFQHLLPQHFQLELAQRDEDENVNIYRARHREPRPA.

S-adenosyl-L-methionine is bound by residues W57, 83–85 (GAG), D104, W133, and A150.

This sequence belongs to the methyltransferase superfamily. METTL21 family. Interacts with members of the heat shock protein 70 and 90 families and of the TCP-1 chaperonin family, as well as with HSPD1, STIP1 and tubulin; at least some of these proteins may be methylation substrates.

The protein resides in the cytoplasm. Its subcellular location is the cytoskeleton. The protein localises to the microtubule organizing center. It localises to the centrosome. The enzyme catalyses L-lysyl-[protein] + 3 S-adenosyl-L-methionine = N(6),N(6),N(6)-trimethyl-L-lysyl-[protein] + 3 S-adenosyl-L-homocysteine + 3 H(+). The catalysed reaction is L-lysyl-[protein] + S-adenosyl-L-methionine = N(6)-methyl-L-lysyl-[protein] + S-adenosyl-L-homocysteine + H(+). It carries out the reaction N(6)-methyl-L-lysyl-[protein] + S-adenosyl-L-methionine = N(6),N(6)-dimethyl-L-lysyl-[protein] + S-adenosyl-L-homocysteine + H(+). It catalyses the reaction N(6),N(6)-dimethyl-L-lysyl-[protein] + S-adenosyl-L-methionine = N(6),N(6),N(6)-trimethyl-L-lysyl-[protein] + S-adenosyl-L-homocysteine + H(+). In terms of biological role, protein-lysine methyltransferase that selectively mono-, di- and trimethylates 'Lys-165' of the translation elongation factors EEF1A1 and EEF1A2 in an aminoacyl-tRNA and GTP-dependent manner. EEF1A1 methylation by EEF1AKMT3 is dynamic as well as inducible by stress conditions, such as ER-stress, and plays a regulatory role on mRNA translation. The sequence is that of EEF1A lysine methyltransferase 3 from Homo sapiens (Human).